Reading from the N-terminus, the 57-residue chain is UPF0391 membrane protein HNE_2348 (57 aa).

The next 2 membrane-spanning stretches (helical) occupy residues 4-24 (WALT…GGIA) and 27-47 (AASI…ITFV).

Belongs to the UPF0391 family.

The protein resides in the cell membrane. The sequence is that of UPF0391 membrane protein HNE_2348 from Hyphomonas neptunium (strain ATCC 15444).